The sequence spans 319 residues: ATP-dependent 6-phosphofructokinase (319 aa).

Residues glycine 10, 71–72 (RS), and 101–104 (GDGS) each bind ATP. Aspartate 102 is a binding site for Mg(2+). 125–127 (TID) provides a ligand contact to substrate. Aspartate 127 functions as the Proton acceptor in the catalytic mechanism. Arginine 154 is an ADP binding site. Substrate is bound by residues arginine 162 and 169 to 171 (MGR). Residue 185–187 (GAE) coordinates ADP. Residues glutamate 223, arginine 244, and 250-253 (HVQR) contribute to the substrate site.

It belongs to the phosphofructokinase type A (PFKA) family. ATP-dependent PFK group I subfamily. Prokaryotic clade 'B1' sub-subfamily. As to quaternary structure, homotetramer. It depends on Mg(2+) as a cofactor.

It localises to the cytoplasm. The catalysed reaction is beta-D-fructose 6-phosphate + ATP = beta-D-fructose 1,6-bisphosphate + ADP + H(+). It functions in the pathway carbohydrate degradation; glycolysis; D-glyceraldehyde 3-phosphate and glycerone phosphate from D-glucose: step 3/4. Its activity is regulated as follows. Allosterically activated by ADP and other diphosphonucleosides, and allosterically inhibited by phosphoenolpyruvate. In terms of biological role, catalyzes the phosphorylation of D-fructose 6-phosphate to fructose 1,6-bisphosphate by ATP, the first committing step of glycolysis. This chain is ATP-dependent 6-phosphofructokinase, found in Wolinella succinogenes (strain ATCC 29543 / DSM 1740 / CCUG 13145 / JCM 31913 / LMG 7466 / NCTC 11488 / FDC 602W) (Vibrio succinogenes).